Reading from the N-terminus, the 137-residue chain is Holo-[acyl-carrier-protein] synthase (137 aa).

The Mg(2+) site is built by Asp8 and Glu57.

Belongs to the P-Pant transferase superfamily. AcpS family. Mg(2+) serves as cofactor.

Its subcellular location is the cytoplasm. The enzyme catalyses apo-[ACP] + CoA = holo-[ACP] + adenosine 3',5'-bisphosphate + H(+). Functionally, transfers the 4'-phosphopantetheine moiety from coenzyme A to a Ser of acyl-carrier-protein. The sequence is that of Holo-[acyl-carrier-protein] synthase from Hyphomonas neptunium (strain ATCC 15444).